The following is a 382-amino-acid chain: Dual-specificity RNA methyltransferase RlmN (382 aa).

Glu-95 acts as the Proton acceptor in catalysis. Positions 101-348 (EDDRGTLCIS…TTVRKTRGDD (248 aa)) constitute a Radical SAM core domain. Cys-108 and Cys-353 are oxidised to a cystine. The [4Fe-4S] cluster site is built by Cys-115, Cys-119, and Cys-122. S-adenosyl-L-methionine is bound by residues 179-180 (GE), Ser-211, 233-235 (SLH), and Asn-310. The S-methylcysteine intermediate role is filled by Cys-353.

Belongs to the radical SAM superfamily. RlmN family. It depends on [4Fe-4S] cluster as a cofactor.

Its subcellular location is the cytoplasm. It carries out the reaction adenosine(2503) in 23S rRNA + 2 reduced [2Fe-2S]-[ferredoxin] + 2 S-adenosyl-L-methionine = 2-methyladenosine(2503) in 23S rRNA + 5'-deoxyadenosine + L-methionine + 2 oxidized [2Fe-2S]-[ferredoxin] + S-adenosyl-L-homocysteine. It catalyses the reaction adenosine(37) in tRNA + 2 reduced [2Fe-2S]-[ferredoxin] + 2 S-adenosyl-L-methionine = 2-methyladenosine(37) in tRNA + 5'-deoxyadenosine + L-methionine + 2 oxidized [2Fe-2S]-[ferredoxin] + S-adenosyl-L-homocysteine. Specifically methylates position 2 of adenine 2503 in 23S rRNA and position 2 of adenine 37 in tRNAs. m2A2503 modification seems to play a crucial role in the proofreading step occurring at the peptidyl transferase center and thus would serve to optimize ribosomal fidelity. This chain is Dual-specificity RNA methyltransferase RlmN, found in Bordetella pertussis (strain Tohama I / ATCC BAA-589 / NCTC 13251).